Consider the following 354-residue polypeptide: Selenide, water dikinase (354 aa).

Cys-23 is an active-site residue. ATP is bound by residues Lys-26 and 54-56 (TSD). Asp-57 serves as a coordination point for Mg(2+). Residues Asp-74, Asp-97, and 145-147 (GHS) contribute to the ATP site. Asp-97 is a Mg(2+) binding site. Asp-233 is a binding site for Mg(2+).

The protein belongs to the selenophosphate synthase 1 family. Class I subfamily. Homodimer. The cofactor is Mg(2+).

It carries out the reaction hydrogenselenide + ATP + H2O = selenophosphate + AMP + phosphate + 2 H(+). Functionally, synthesizes selenophosphate from selenide and ATP. The polypeptide is Selenide, water dikinase (Burkholderia ambifaria (strain MC40-6)).